The following is a 430-amino-acid chain: Tol-Pal system protein TolB (430 aa).

A signal peptide spans 1–26 (MSLMTKLGLRALVASCLIAAGGAAHA).

This sequence belongs to the TolB family. The Tol-Pal system is composed of five core proteins: the inner membrane proteins TolA, TolQ and TolR, the periplasmic protein TolB and the outer membrane protein Pal. They form a network linking the inner and outer membranes and the peptidoglycan layer.

The protein localises to the periplasm. Its function is as follows. Part of the Tol-Pal system, which plays a role in outer membrane invagination during cell division and is important for maintaining outer membrane integrity. This is Tol-Pal system protein TolB from Paraburkholderia phymatum (strain DSM 17167 / CIP 108236 / LMG 21445 / STM815) (Burkholderia phymatum).